Consider the following 293-residue polypeptide: MLDVNKKILMTGATSFVGTHLLHSLIKEGYSIIALKRPITEPTIINTLIEWLNIQDIEKICQSSMNIHAIVHIATDYGRNRTPISEQYKCNVLLPTRLLELMPALKTKFFISTDSFFGKYEKHYGYMRSYMASKRHFVELSKIYVEEHPDVCFINLRLEHVYGERDKAGKIIPYVIKKMKNNEDIDCTIARQKRDFIYIDDVVSAYLKILKEGFNAGHYDVEVGTGKSIELKEVFEIIKKETHSSSKINYGAVAMRDDEIMESHANTSFLTRLGWSAEFSIEKGVKKMLSMKE.

Threonine 113 is a substrate binding site. Catalysis depends on tyrosine 130, which acts as the Proton acceptor.

It belongs to the NAD(P)-dependent epimerase/dehydratase family.

It carries out the reaction CDP-alpha-D-abequose + NADP(+) = CDP-4-dehydro-3,6-dideoxy-alpha-D-glucose + NADPH + H(+). Its pathway is bacterial outer membrane biogenesis; LPS O-antigen biosynthesis. The chain is CDP-abequose synthase from Salmonella muenchen.